The chain runs to 330 residues: 4-epi-cubebol synthase ((2E,6E)-farnesyl diphosphate cyclizing) (330 aa).

Positions 91 and 96 each coordinate Mg(2+). A DDXXXE motif motif is present at residues 91–96 (DDAFCE). Arginine 184 lines the substrate pocket. The Mg(2+) site is built by asparagine 230 and serine 234. Lysine 237 lines the substrate pocket. Residue glutamate 238 coordinates Mg(2+). 316-317 (RY) serves as a coordination point for substrate.

This sequence belongs to the terpene synthase family. The cofactor is Mg(2+).

It catalyses the reaction (2E,6E)-farnesyl diphosphate + H2O = 4-epi-cubebol + diphosphate. It participates in secondary metabolite biosynthesis; terpenoid biosynthesis. Functionally, catalyzes the conversion of (2E,6E)-farnesyl diphosphate (FPP) to yield the bicyclic sesquiterpenol 4-epi-cubebol via a 1,10-cyclization, which requires the abstraction of the pyrophosphate from FPP to yield a (E,E)-germacradienyl cation. The only accepted substrate is (2E,6E)-farnesyl diphosphate (FPP). In Streptosporangium roseum (strain ATCC 12428 / DSM 43021 / JCM 3005 / KCTC 9067 / NCIMB 10171 / NRRL 2505 / NI 9100), this protein is 4-epi-cubebol synthase ((2E,6E)-farnesyl diphosphate cyclizing).